The primary structure comprises 104 residues: Flagellar hook-basal body complex protein FliE (104 aa).

Belongs to the FliE family.

The protein resides in the bacterial flagellum basal body. The polypeptide is Flagellar hook-basal body complex protein FliE (Pectobacterium carotovorum subsp. carotovorum (strain PC1)).